Reading from the N-terminus, the 366-residue chain is Chorismate synthase (366 aa).

The NADP(+) site is built by arginine 48 and arginine 54. FMN-binding positions include 125–127 (RSS), 242–243 (NA), glycine 287, 302–306 (KPTSS), and arginine 328.

The protein belongs to the chorismate synthase family. In terms of assembly, homotetramer. FMNH2 is required as a cofactor.

It catalyses the reaction 5-O-(1-carboxyvinyl)-3-phosphoshikimate = chorismate + phosphate. The protein operates within metabolic intermediate biosynthesis; chorismate biosynthesis; chorismate from D-erythrose 4-phosphate and phosphoenolpyruvate: step 7/7. Catalyzes the anti-1,4-elimination of the C-3 phosphate and the C-6 proR hydrogen from 5-enolpyruvylshikimate-3-phosphate (EPSP) to yield chorismate, which is the branch point compound that serves as the starting substrate for the three terminal pathways of aromatic amino acid biosynthesis. This reaction introduces a second double bond into the aromatic ring system. In Rhodospirillum rubrum (strain ATCC 11170 / ATH 1.1.1 / DSM 467 / LMG 4362 / NCIMB 8255 / S1), this protein is Chorismate synthase.